Consider the following 317-residue polypeptide: Ribosomal RNA small subunit methyltransferase H (317 aa).

S-adenosyl-L-methionine is bound by residues 37 to 39 (AGH), Asp-56, Phe-85, Asp-106, and Gln-113.

Belongs to the methyltransferase superfamily. RsmH family.

The protein localises to the cytoplasm. The enzyme catalyses cytidine(1402) in 16S rRNA + S-adenosyl-L-methionine = N(4)-methylcytidine(1402) in 16S rRNA + S-adenosyl-L-homocysteine + H(+). In terms of biological role, specifically methylates the N4 position of cytidine in position 1402 (C1402) of 16S rRNA. This is Ribosomal RNA small subunit methyltransferase H from Lactococcus lactis subsp. cremoris (strain SK11).